A 40-amino-acid polypeptide reads, in one-letter code: Large ribosomal subunit protein bL36A (40 aa).

It belongs to the bacterial ribosomal protein bL36 family.

This Paenarthrobacter aurescens (strain TC1) protein is Large ribosomal subunit protein bL36A.